We begin with the raw amino-acid sequence, 668 residues long: Probable syringafactin export ATP-binding/permease protein SyfD (668 aa).

An ABC transporter domain is found at 22–260 (LRLQQVSRSF…APEAQPATPP (239 aa)). 58–65 (GASGSGKS) is an ATP binding site. Residues 242–263 (RRTAQTTQPAPEAQPATPPGPA) form a disordered region. Residues 245-256 (AQTTQPAPEAQP) are compositionally biased toward low complexity. 5 consecutive transmembrane segments (helical) span residues 267-287 (LLAS…ALIS), 293-313 (LLTM…SAIG), 541-561 (LTLL…IGVM), 602-622 (MGGV…TLFV), and 631-651 (LASV…FGFV).

The protein belongs to the ABC transporter superfamily. Macrolide exporter (TC 3.A.1.122) family. In terms of assembly, probably part of a tripartite efflux system, which is composed of an inner membrane transporter, a periplasmic membrane fusion protein, and an outer membrane component.

It localises to the cell inner membrane. In terms of biological role, probably involved in the export of syringafactins. The polypeptide is Probable syringafactin export ATP-binding/permease protein SyfD (Pseudomonas syringae pv. tomato (strain ATCC BAA-871 / DC3000)).